A 50-amino-acid polypeptide reads, in one-letter code: PsaJ-like protein asl3190 (50 aa).

Residues Val21–Phe41 traverse the membrane as a helical segment.

The protein belongs to the PsaJ family.

It is found in the cellular thylakoid membrane. The polypeptide is PsaJ-like protein asl3190 (Nostoc sp. (strain PCC 7120 / SAG 25.82 / UTEX 2576)).